Consider the following 316-residue polypeptide: Methionyl-tRNA formyltransferase (316 aa).

A (6S)-5,6,7,8-tetrahydrofolate-binding site is contributed by 112–115; sequence SLLP.

The protein belongs to the Fmt family.

The enzyme catalyses L-methionyl-tRNA(fMet) + (6R)-10-formyltetrahydrofolate = N-formyl-L-methionyl-tRNA(fMet) + (6S)-5,6,7,8-tetrahydrofolate + H(+). Functionally, attaches a formyl group to the free amino group of methionyl-tRNA(fMet). The formyl group appears to play a dual role in the initiator identity of N-formylmethionyl-tRNA by promoting its recognition by IF2 and preventing the misappropriation of this tRNA by the elongation apparatus. This Trichlorobacter lovleyi (strain ATCC BAA-1151 / DSM 17278 / SZ) (Geobacter lovleyi) protein is Methionyl-tRNA formyltransferase.